Consider the following 815-residue polypeptide: Phenylalanine--tRNA ligase beta subunit (815 aa).

Positions 39–148 constitute a tRNA-binding domain; that stretch reads ATELQKFEVA…EYAVVGDNFT (110 aa). Residues 420–495 form the B5 domain; the sequence is LQKIPLDFSV…RIYGYDKIES (76 aa). Positions 473, 479, 482, and 483 each coordinate Mg(2+). Residues 721–814 form the FDX-ACB domain; that stretch reads SDFQANFRDY…ISQKFQGTLR (94 aa).

This sequence belongs to the phenylalanyl-tRNA synthetase beta subunit family. Type 1 subfamily. As to quaternary structure, tetramer of two alpha and two beta subunits. Mg(2+) serves as cofactor.

It is found in the cytoplasm. The enzyme catalyses tRNA(Phe) + L-phenylalanine + ATP = L-phenylalanyl-tRNA(Phe) + AMP + diphosphate + H(+). This chain is Phenylalanine--tRNA ligase beta subunit, found in Rickettsia typhi (strain ATCC VR-144 / Wilmington).